Consider the following 252-residue polypeptide: Ribosome assembly factor mrt4 (252 aa).

Belongs to the universal ribosomal protein uL10 family. As to quaternary structure, associates with the pre-60S ribosomal particle.

The protein resides in the nucleus. Its subcellular location is the nucleolus. It localises to the cytoplasm. Component of the ribosome assembly machinery. Nuclear paralog of the ribosomal protein P0, it binds pre-60S subunits at an early stage of assembly in the nucleolus, and is replaced by P0 in cytoplasmic pre-60S subunits and mature 80S ribosomes. In Neurospora crassa (strain ATCC 24698 / 74-OR23-1A / CBS 708.71 / DSM 1257 / FGSC 987), this protein is Ribosome assembly factor mrt4.